Here is a 458-residue protein sequence, read N- to C-terminus: Retinoic acid receptor gamma (458 aa).

Positions 1-89 (MATNKERLFA…PPPPPRVYKP (89 aa)) are modulating. At R34 the chain carries Omega-N-methylarginine. The segment at 58-83 (MASLSVETQSTSSEEMVPSSPSPPPP) is disordered. Positions 62–71 (SVETQSTSSE) are enriched in polar residues. NR C4-type zinc fingers lie at residues 90 to 110 (CFVC…CEGC) and 126 to 150 (CHRD…LQKC). The nuclear receptor DNA-binding region spans 90 to 155 (CFVCNDKSSG…RLQKCFEVGM (66 aa)). Positions 156 to 184 (SKEAVRNDRNKKKKEVKEEGSPDSYELSP) are hinge. Residues 161-180 (RNDRNKKKKEVKEEGSPDSY) form a disordered region. Residues K172 and K401 each participate in a glycyl lysine isopeptide (Lys-Gly) (interchain with G-Cter in SUMO2) cross-link. Residues 185-419 (QLEELITKVS…PLIREMLENP (235 aa)) form the NR LBD domain. The interval 409-458 (PPLIREMLENPEMFEDDSSKPGPHPKASSEDEAPGGQGKRGQSPQPDQGP) is disordered. A compositionally biased stretch (polar residues) spans 448–458 (RGQSPQPDQGP).

It belongs to the nuclear hormone receptor family. NR1 subfamily. As to quaternary structure, homodimer. Heterodimer with a RXR molecule. Binds DNA preferentially as a RAR/RXR heterodimer. Forms a complex with PUS1 and the SRA1 RNA in the nucleus.

It is found in the nucleus. It localises to the cytoplasm. In terms of biological role, receptor for retinoic acid. Retinoic acid receptors bind as heterodimers to their target response elements in response to their ligands, all-trans or 9-cis retinoic acid, and regulate gene expression in various biological processes. The RAR/RXR heterodimers bind to the retinoic acid response elements (RARE) composed of tandem 5'-AGGTCA-3' sites known as DR1-DR5. In the absence of ligand, acts mainly as an activator of gene expression due to weak binding to corepressors. Required for limb bud development. In concert with RARA or RARB, required for skeletal growth, matrix homeostasis and growth plate function. This Mus musculus (Mouse) protein is Retinoic acid receptor gamma (Rarg).